A 619-amino-acid chain; its full sequence is Secretogranin-2 (619 aa).

The N-terminal stretch at 1 to 30 (MTESKAYRFGAVLLLIHLIFLVPGTEAASF) is a signal peptide. Y153 carries the sulfotyrosine modification. Phosphoserine occurs at positions 176 and 270. The disordered stretch occupies residues 247 to 307 (VGGEDWSPME…RKESKDQLSE (61 aa)). Basic and acidic residues-rich tracts occupy residues 255-286 (MEEKIETQTQEEVRDSKENTEKNEQINEEMKR) and 295-307 (EGNRKESKDQLSE). Phosphoserine is present on residues S434, S534, S557, and S558.

The protein belongs to the chromogranin/secretogranin protein family. In terms of assembly, interacts with Secretogranin III/SCG3. In terms of tissue distribution, brain. Expression in the pituitary is restricted to the anterior lobe. Expression in the hypothalamus is observed in the neuronal cells and neurons of arcuate nucleus, supraoptic nucleus and median eminence (at protein level).

Its subcellular location is the secreted. Functionally, neuroendocrine protein of the granin family that regulates the biogenesis of secretory granules. In Rattus norvegicus (Rat), this protein is Secretogranin-2 (Scg2).